We begin with the raw amino-acid sequence, 204 residues long: AFG2-interacting ribosome maturation factor (204 aa).

As to quaternary structure, part of the 55LCC heterohexameric ATPase complex. Does not associate with pre-60S ribosomal particles.

Its subcellular location is the nucleus. The protein resides in the cytoplasm. Its function is as follows. Part of the 55LCC heterohexameric ATPase complex which is chromatin-associated and promotes replisome proteostasis to maintain replication fork progression and genome stability. Required for replication fork progression, sister chromatid cohesion, and chromosome stability. The ATPase activity is specifically enhanced by replication fork DNA and is coupled to cysteine protease-dependent cleavage of replisome substrates in response to replication fork damage. Uses ATPase activity to process replisome substrates in S-phase, facilitating their proteolytic turnover from chromatin to ensure DNA replication and mitotic fidelity. Involved in the cytoplasmic maturation steps of pre-60S ribosomal particles by promoting the release of shuttling protein RSL24D1/RLP24 from the pre-ribosomal particles. This is AFG2-interacting ribosome maturation factor (airim) from Xenopus tropicalis (Western clawed frog).